The chain runs to 403 residues: Fasciclin-like arabinogalactan protein 2 (403 aa).

A signal peptide spans 1–26 (MAYLRRAATALVLIFQLHLFLSLSNA). 2 consecutive FAS1 domains span residues 27–174 (HNIT…SQVL) and 187–326 (SDLI…DKVL). 4 N-linked (GlcNAc...) asparagine glycosylation sites follow: asparagine 28, asparagine 130, asparagine 164, and asparagine 248. The interval 338-371 (SAPAPKSSKKKPKNAEADADGPSADAPSDDDVEV) is disordered. Alanine 378 is lipidated: GPI-anchor amidated alanine. Residues 379 to 403 (VSAMITRTSNVVTAIVGLCFGVWLM) constitute a propeptide, removed in mature form.

This sequence belongs to the fasciclin-like AGP family. In terms of tissue distribution, expressed mainly in flowers and to a lesser extent in leaves and roots.

The protein localises to the cell membrane. May be a cell surface adhesion protein. The protein is Fasciclin-like arabinogalactan protein 2 (FLA2) of Arabidopsis thaliana (Mouse-ear cress).